A 104-amino-acid polypeptide reads, in one-letter code: MSQVRKNDHSLMKVLLGPVISEKATMVAEKNEQVVFQVARDANKSDVKQAVELLFKVQVDSVQIVNQKGKPKRYGRFEGRRDHTKKAYVNLKPGQEINFEAEAN.

It belongs to the universal ribosomal protein uL23 family. Part of the 50S ribosomal subunit. Contacts protein L29, and trigger factor when it is bound to the ribosome.

One of the early assembly proteins it binds 23S rRNA. One of the proteins that surrounds the polypeptide exit tunnel on the outside of the ribosome. Forms the main docking site for trigger factor binding to the ribosome. This is Large ribosomal subunit protein uL23 from Polynucleobacter asymbioticus (strain DSM 18221 / CIP 109841 / QLW-P1DMWA-1) (Polynucleobacter necessarius subsp. asymbioticus).